A 1275-amino-acid polypeptide reads, in one-letter code: Rho1 guanine nucleotide exchange factor 3 (1275 aa).

Disordered regions lie at residues 1 to 42 (MKLS…SFQK), 56 to 113 (SPPF…NSAA), 131 to 188 (NNPL…SPYS), and 214 to 248 (LSPTRSPARTPSPIRLYSSDALRPQSPLSPSVEYL). Positions 7-17 (LFHRSSKDHGG) are enriched in basic and acidic residues. 3 stretches are compositionally biased toward polar residues: residues 32–42 (PHSSSPPSFQK), 80–113 (ASINSRRVASYTVQSSPSRTTYRQLPNEPQNSAA), and 142–151 (SPGNKQNTVD). Low complexity-rich tracts occupy residues 178–188 (SSVSSHSSPYS) and 214–228 (LSPTRSPARTPSPIR). Serine 293 bears the Phosphoserine mark. The 193-residue stretch at 465–657 (ARQNNIHELI…RATCEECDAV (193 aa)) folds into the DH domain. Residues 692 to 855 (EFFFEGIVQR…WVEKINVAKK (164 aa)) enclose the PH domain. The CNH domain maps to 930-1239 (YGDISCIAQF…KYYPSNSDWL (310 aa)).

It localises to the cytoplasm. Its function is as follows. Stimulates the exchange of Rho1 GDP-bound form into GTP-bound form. Regulates, via interaction and activation of Rho1, beta-1,3-glucan biosynthesis and cell wall integrity during septation. Involved in the regulation of contractile ring assembly. In Schizosaccharomyces pombe (strain 972 / ATCC 24843) (Fission yeast), this protein is Rho1 guanine nucleotide exchange factor 3 (rgf3).